The chain runs to 98 residues: Small proline-rich protein 2B (98 aa).

Repeat copies occupy residues 21-29 (PKCPEPCPP), 30-38 (PKCPEPCPP), 39-47 (PVCCEPCPP), 48-56 (PKCPEPCPP), and 57-65 (PVCCEPCPP). Positions 21–65 (PKCPEPCPPPKCPEPCPPPVCCEPCPPPKCPEPCPPPVCCEPCPP) are 5 X 9 AA approximate tandem repeats.

Belongs to the cornifin (SPRR) family. As to expression, expressed in uterus.

It localises to the cytoplasm. Its function is as follows. Cross-linked envelope protein of keratinocytes. It is a keratinocyte protein that first appears in the cell cytosol, but ultimately becomes cross-linked to membrane proteins by transglutaminase. All that results in the formation of an insoluble envelope beneath the plasma membrane. In Mus musculus (Mouse), this protein is Small proline-rich protein 2B (Sprr2b).